A 922-amino-acid chain; its full sequence is Golgi-associated RAB2 interactor protein 5B (922 aa).

6 disordered regions span residues 244-264, 292-317, 373-404, 424-597, 758-830, and 842-869; these read DVRK…DRTH, QSSP…SPSH, TPYS…KAPS, AVPA…TQET, QPES…LRPS, and ATAR…LATV. A compositionally biased stretch (polar residues) spans 292 to 305; it reads QSSPKACTSASDEA. Pro residues predominate over residues 431–441; it reads KPPPGLAPPQK. Low complexity-rich tracts occupy residues 442 to 458 and 471 to 495; these read APAA…VPAP and KAPA…ASAV. The span at 496–507 shows a compositional bias: pro residues; that stretch reads PAPPQKTPPPSQ. Positions 758-788 are enriched in basic and acidic residues; it reads QPESHTWVKEGKRPWGEMKEQPWGEMKEPPW.

Belongs to the GARIN family.

The sequence is that of Golgi-associated RAB2 interactor protein 5B from Homo sapiens (Human).